A 66-amino-acid chain; its full sequence is Large ribosomal subunit protein bL33c (66 aa).

It belongs to the bacterial ribosomal protein bL33 family.

It is found in the plastid. The protein localises to the chloroplast. The protein is Large ribosomal subunit protein bL33c of Jasminum nudiflorum (Winter jasmine).